We begin with the raw amino-acid sequence, 221 residues long: Endonuclease V (221 aa).

Mg(2+)-binding residues include Asp44 and Asp112.

The protein belongs to the endonuclease V family. Requires Mg(2+) as cofactor.

It localises to the cytoplasm. The enzyme catalyses Endonucleolytic cleavage at apurinic or apyrimidinic sites to products with a 5'-phosphate.. Its function is as follows. DNA repair enzyme involved in the repair of deaminated bases. Selectively cleaves double-stranded DNA at the second phosphodiester bond 3' to a deoxyinosine leaving behind the intact lesion on the nicked DNA. The chain is Endonuclease V from Trichormus variabilis (strain ATCC 29413 / PCC 7937) (Anabaena variabilis).